Here is a 428-residue protein sequence, read N- to C-terminus: 3-phosphoshikimate 1-carboxyvinyltransferase (428 aa).

Residues K19, S20, and R24 each coordinate 3-phosphoshikimate. K19 lines the phosphoenolpyruvate pocket. Positions 91 and 119 each coordinate phosphoenolpyruvate. 3-phosphoshikimate contacts are provided by S164, Q166, D312, and K339. Residue Q166 participates in phosphoenolpyruvate binding. The active-site Proton acceptor is D312. Positions 343 and 386 each coordinate phosphoenolpyruvate.

This sequence belongs to the EPSP synthase family. In terms of assembly, monomer.

It localises to the cytoplasm. The catalysed reaction is 3-phosphoshikimate + phosphoenolpyruvate = 5-O-(1-carboxyvinyl)-3-phosphoshikimate + phosphate. It participates in metabolic intermediate biosynthesis; chorismate biosynthesis; chorismate from D-erythrose 4-phosphate and phosphoenolpyruvate: step 6/7. Its function is as follows. Catalyzes the transfer of the enolpyruvyl moiety of phosphoenolpyruvate (PEP) to the 5-hydroxyl of shikimate-3-phosphate (S3P) to produce enolpyruvyl shikimate-3-phosphate and inorganic phosphate. The sequence is that of 3-phosphoshikimate 1-carboxyvinyltransferase from Bacillus pumilus (strain SAFR-032).